The primary structure comprises 135 residues: Small ribosomal subunit protein bS16 (135 aa).

The interval 82 to 135 (RPAETVGKAKQAAKREADAKQAAKEAAEAKAAAADEKAAEAEASDSAESESTEG) is disordered. Over residues 94 to 121 (AKREADAKQAAKEAAEAKAAAADEKAAE) the composition is skewed to basic and acidic residues. A compositionally biased stretch (acidic residues) spans 123–135 (EASDSAESESTEG).

This sequence belongs to the bacterial ribosomal protein bS16 family.

In Synechococcus sp. (strain CC9605), this protein is Small ribosomal subunit protein bS16.